The chain runs to 66 residues: Opicalcin-2 (66 aa).

The first 22 residues, 1–22 (MKPSLIIVTFIVVFMTISCVAA), serve as a signal peptide directing secretion. A propeptide spanning residues 23 to 31 (DDEQETWIE) is cleaved from the precursor. Disulfide bonds link Cys36–Cys50, Cys43–Cys54, and Cys49–Cys65. Residues 55 to 57 (KRR) form an essential for stimulation of [3H]ryanodine binding to RYR1 region.

Belongs to the scorpion calcin family. As to expression, expressed by the venom gland.

It is found in the secreted. Functionally, this toxin stabilizes ryanodine receptor 1 (RyR1) opening in a long-lasting subconductance state (40% of the full conductance state). Furthermore, it triggers calcium release from sarcoplasmic vesicles (64.2 nM are enough to induce a sharp release, and 50% of the total calcium is released after toxin (100 nM) addition) probably by acting as a cell-penetrating peptide (CPP). In addition, it has been shown to dose-dependently stimulate ryanodine binding to RyR1 (EC(50)=3.2 nM). It also augments the bell-shaped calcium-[3H]ryanodine binding curve that is maximal at about 10 uM calcium concentration. It binds a different site as ryanodine. It acts synergistically with caffeine. In vivo, intracerebroventricular injection into mice induces neurotoxic symptoms, followed by death. This Opistophthalmus carinatus (African yellow leg scorpion) protein is Opicalcin-2.